A 285-amino-acid polypeptide reads, in one-letter code: ATP synthase gamma chain (285 aa).

This sequence belongs to the ATPase gamma chain family. F-type ATPases have 2 components, CF(1) - the catalytic core - and CF(0) - the membrane proton channel. CF(1) has five subunits: alpha(3), beta(3), gamma(1), delta(1), epsilon(1). CF(0) has three main subunits: a, b and c.

The protein localises to the cell membrane. In terms of biological role, produces ATP from ADP in the presence of a proton gradient across the membrane. The gamma chain is believed to be important in regulating ATPase activity and the flow of protons through the CF(0) complex. This chain is ATP synthase gamma chain, found in Lysinibacillus sphaericus (strain C3-41).